The sequence spans 483 residues: Xylulose kinase (483 aa).

M79–H80 contributes to the substrate binding site.

Belongs to the FGGY kinase family.

The enzyme catalyses D-xylulose + ATP = D-xylulose 5-phosphate + ADP + H(+). Functionally, catalyzes the phosphorylation of D-xylulose to D-xylulose 5-phosphate. The polypeptide is Xylulose kinase (Staphylococcus xylosus).